The primary structure comprises 396 residues: Gap junction gamma-1 protein (396 aa).

The Cytoplasmic portion of the chain corresponds to 1–22 (MSWSFLTRLLEEIHNHSTFVGK). A helical transmembrane segment spans residues 23–45 (IWLTVLIAFRIALTAVGGESIYY). Over 46 to 75 (DEQSKFVCNTEQPGCENVCYDAFAPLSHVR) the chain is Extracellular. The chain crosses the membrane as a helical span at residues 76 to 95 (FWVFQIILVATPSVMYLGYA). The Cytoplasmic segment spans residues 96–175 (IHKIAKMEHG…RRIREDGLMK (80 aa)). Positions 145–165 (ELESEKENKEQNQPKPKHDGR) are disordered. A compositionally biased stretch (basic and acidic residues) spans 147–156 (ESEKENKEQN). Residues 176-198 (IYVLQLLARTVFEVGFLIGQYFL) form a helical membrane-spanning segment. Residues 199 to 228 (YGFQVHPFYVCSRLPCPHKIDCFISRPTEK) lie on the Extracellular side of the membrane. Residues 229-248 (TIFLLIMYGVTGLCLLLNIW) traverse the membrane as a helical segment. The Cytoplasmic segment spans residues 249 to 396 (EMLHLGFGTI…SGDGKNSVWI (148 aa)). A disordered region spans residues 355-396 (AYSHQNNPHGPREKKAKVGSKAGSNKSSASSKSGDGKNSVWI). Residues 373 to 396 (GSKAGSNKSSASSKSGDGKNSVWI) show a composition bias toward low complexity.

It belongs to the connexin family. Gamma-type subfamily. As to quaternary structure, a connexon is composed of a hexamer of connexins. Interacts with CNST.

Its subcellular location is the cell membrane. It localises to the cell junction. The protein localises to the gap junction. One gap junction consists of a cluster of closely packed pairs of transmembrane channels, the connexons, through which materials of low MW diffuse from one cell to a neighboring cell. The chain is Gap junction gamma-1 protein (GJC1) from Canis lupus familiaris (Dog).